Here is a 103-residue protein sequence, read N- to C-terminus: Large ribosomal subunit protein bL21 (103 aa).

This sequence belongs to the bacterial ribosomal protein bL21 family. Part of the 50S ribosomal subunit. Contacts protein L20.

Its function is as follows. This protein binds to 23S rRNA in the presence of protein L20. The protein is Large ribosomal subunit protein bL21 of Haemophilus ducreyi (strain 35000HP / ATCC 700724).